Here is a 130-residue protein sequence, read N- to C-terminus: Phosphoribosyl-ATP pyrophosphatase (130 aa).

This sequence belongs to the PRA-PH family.

Its subcellular location is the cytoplasm. It catalyses the reaction 1-(5-phospho-beta-D-ribosyl)-ATP + H2O = 1-(5-phospho-beta-D-ribosyl)-5'-AMP + diphosphate + H(+). It participates in amino-acid biosynthesis; L-histidine biosynthesis; L-histidine from 5-phospho-alpha-D-ribose 1-diphosphate: step 2/9. This is Phosphoribosyl-ATP pyrophosphatase from Albidiferax ferrireducens (strain ATCC BAA-621 / DSM 15236 / T118) (Rhodoferax ferrireducens).